The following is a 119-amino-acid chain: E3 ubiquitin-protein ligase PPP1R11 (119 aa).

Positions 1 to 42 (MAESSGPTAGGGATSSTVTTESDTQPEHRSLTLKLRKRKPDK) are disordered. Atypical RING finger domain stretches follow at residues 55-65 (NLGRRSSKCCC) and 87-96 (CESAHCIRGH). A disordered region spans residues 96-119 (HKKATSGSKETPSSHHDKTGSMQH). Basic and acidic residues predominate over residues 107 to 119 (PSSHHDKTGSMQH).

It carries out the reaction S-ubiquitinyl-[E2 ubiquitin-conjugating enzyme]-L-cysteine + [acceptor protein]-L-lysine = [E2 ubiquitin-conjugating enzyme]-L-cysteine + N(6)-ubiquitinyl-[acceptor protein]-L-lysine.. It participates in protein modification; protein ubiquitination. Its function is as follows. Atypical E3 ubiquitin-protein ligase which ubiquitinates TLR2 at 'Lys-754' leading to its degradation by the proteasome. Inhibitor of protein phosphatase 1. This is E3 ubiquitin-protein ligase PPP1R11 (ppp1r11) from Xenopus tropicalis (Western clawed frog).